Consider the following 368-residue polypeptide: RNA polymerase sigma factor SigA (368 aa).

Positions 60–86 are disordered; it reads VVDENGDPSEHSLKKDEKEAEKAQAED. Residues 67-84 show a composition bias toward basic and acidic residues; the sequence is PSEHSLKKDEKEAEKAQA. The tract at residues 135 to 205 is sigma-70 factor domain-2; the sequence is LAEANLRLVV…TRAIADQART (71 aa). The Interaction with polymerase core subunit RpoC motif lies at 159 to 162; sequence DLIQ. Residues 214–290 form a sigma-70 factor domain-3 region; it reads ETINKLIRIQ…DQDATSPAEH (77 aa). The tract at residues 303–356 is sigma-70 factor domain-4; the sequence is VLDTLTDREENVLRLRFGLDDGRTRTLEEVGKVFGVTRERIRQIEAKALRKLRH. Positions 329–348 form a DNA-binding region, H-T-H motif; the sequence is LEEVGKVFGVTRERIRQIEA.

Belongs to the sigma-70 factor family. RpoD/SigA subfamily. In terms of assembly, interacts transiently with the RNA polymerase catalytic core.

Its subcellular location is the cytoplasm. In terms of biological role, sigma factors are initiation factors that promote the attachment of RNA polymerase to specific initiation sites and are then released. This sigma factor is the primary sigma factor during exponential growth. The polypeptide is RNA polymerase sigma factor SigA (Enterococcus faecalis (strain ATCC 700802 / V583)).